The sequence spans 640 residues: Threonine--tRNA ligase (640 aa).

Residues 1 to 60 form the TGS domain; that stretch reads MKITFPDGAVKEFEPGVSTADIAASISPGLKKKALAGKLNGELLDLVTPIHEDGAIEIVT. The interval 241-538 is catalytic; sequence DHRKLGKELE…LIEEYKGAFP (298 aa). 3 residues coordinate Zn(2+): Cys-334, His-385, and His-515.

Belongs to the class-II aminoacyl-tRNA synthetase family. As to quaternary structure, homodimer. Zn(2+) is required as a cofactor.

It localises to the cytoplasm. The enzyme catalyses tRNA(Thr) + L-threonine + ATP = L-threonyl-tRNA(Thr) + AMP + diphosphate + H(+). Functionally, catalyzes the attachment of threonine to tRNA(Thr) in a two-step reaction: L-threonine is first activated by ATP to form Thr-AMP and then transferred to the acceptor end of tRNA(Thr). Also edits incorrectly charged L-seryl-tRNA(Thr). This Listeria welshimeri serovar 6b (strain ATCC 35897 / DSM 20650 / CCUG 15529 / CIP 8149 / NCTC 11857 / SLCC 5334 / V8) protein is Threonine--tRNA ligase.